We begin with the raw amino-acid sequence, 229 residues long: PHO85 cyclin-5 (229 aa).

Basic and acidic residues predominate over residues 1–24 (MDGNHRFTPDSKEFNTVVKSKESS). Residues 1 to 46 (MDGNHRFTPDSKEFNTVVKSKESSTGRNPYQTPPLEHNGTHHQTNY) form a disordered region.

It belongs to the cyclin family. PCL1,2 subfamily. In terms of assembly, forms a cyclin-CDK complex with PHO85.

In terms of biological role, cyclin partner of the cyclin-dependent kinase (CDK) PHO85. Positively controls degradation of transcription factor GCN4 under favorable growth conditions. The PCL5-PHO85 cyclin-CDK holoenzyme phosphorylates GCN4, which is required for its degradation by the E3 ubiquitin ligase complex SCF(Cdc4). Amino acid starvation reduces PCL5-PHO85-associated GCN4 kinase activity and leads to stabilization of GCN4. In Saccharomyces cerevisiae (strain ATCC 204508 / S288c) (Baker's yeast), this protein is PHO85 cyclin-5 (PCL5).